The primary structure comprises 554 residues: Hydroxylamine reductase (554 aa).

[2Fe-2S] cluster contacts are provided by Cys-3, Cys-6, Cys-18, and Cys-25. The hybrid [4Fe-2O-2S] cluster site is built by His-252, Glu-276, Cys-320, Cys-408, Cys-436, Cys-461, Glu-495, and Lys-497. The residue at position 408 (Cys-408) is a Cysteine persulfide.

This sequence belongs to the HCP family. It depends on [2Fe-2S] cluster as a cofactor. Hybrid [4Fe-2O-2S] cluster is required as a cofactor.

It is found in the cytoplasm. It carries out the reaction A + NH4(+) + H2O = hydroxylamine + AH2 + H(+). In terms of biological role, catalyzes the reduction of hydroxylamine to form NH(3) and H(2)O. The sequence is that of Hydroxylamine reductase from Shewanella baltica (strain OS223).